A 175-amino-acid polypeptide reads, in one-letter code: Inosine/xanthosine triphosphatase (175 aa).

Position 8–13 (8–13 (TTNPAK)) interacts with substrate. Mg(2+) is bound by residues D38 and E68. 68–69 (EA) is a binding site for substrate.

Belongs to the YjjX NTPase family. In terms of assembly, homodimer. Mg(2+) serves as cofactor. The cofactor is Mn(2+).

It catalyses the reaction XTP + H2O = XDP + phosphate + H(+). The catalysed reaction is ITP + H2O = IDP + phosphate + H(+). In terms of biological role, phosphatase that hydrolyzes non-canonical purine nucleotides such as XTP and ITP to their respective diphosphate derivatives. Probably excludes non-canonical purines from DNA/RNA precursor pool, thus preventing their incorporation into DNA/RNA and avoiding chromosomal lesions. The polypeptide is Inosine/xanthosine triphosphatase (Yersinia enterocolitica serotype O:8 / biotype 1B (strain NCTC 13174 / 8081)).